A 298-amino-acid polypeptide reads, in one-letter code: Tyrosine recombinase XerC (298 aa).

In terms of domain architecture, Core-binding (CB) spans 1-84 (MNHIQDAFLN…TLRTFYEYWM (84 aa)). Residues 105-286 (YLPQFFYEEE…SNQQLRKVYL (182 aa)) enclose the Tyr recombinase domain. Catalysis depends on residues Arg145, Lys169, His238, Arg241, and His264. The O-(3'-phospho-DNA)-tyrosine intermediate role is filled by Tyr273.

This sequence belongs to the 'phage' integrase family. XerC subfamily. In terms of assembly, forms a cyclic heterotetrameric complex composed of two molecules of XerC and two molecules of XerD.

It is found in the cytoplasm. Functionally, site-specific tyrosine recombinase, which acts by catalyzing the cutting and rejoining of the recombining DNA molecules. The XerC-XerD complex is essential to convert dimers of the bacterial chromosome into monomers to permit their segregation at cell division. It also contributes to the segregational stability of plasmids. In Staphylococcus aureus (strain USA300), this protein is Tyrosine recombinase XerC.